Here is a 385-residue protein sequence, read N- to C-terminus: uncharacterized protein (385 aa).

It belongs to the mycobacterial PPE family.

This is an uncharacterized protein from Mycobacterium tuberculosis (strain CDC 1551 / Oshkosh).